The following is a 130-amino-acid chain: MSMQDTLADMFTRIRNAQMASKADVTMPSSKMKVSVAQVLKDEGYVADFSVSADAKPELTITLKYFGGKPVIEEIQRVSRPSLRQYKGAGELPKVAGGLGVAIVSTSRGVMTDRAARAAGVGGEVICTVF.

This sequence belongs to the universal ribosomal protein uS8 family. As to quaternary structure, part of the 30S ribosomal subunit. Contacts proteins S5 and S12.

One of the primary rRNA binding proteins, it binds directly to 16S rRNA central domain where it helps coordinate assembly of the platform of the 30S subunit. The polypeptide is Small ribosomal subunit protein uS8 (Marinobacter nauticus (strain ATCC 700491 / DSM 11845 / VT8) (Marinobacter aquaeolei)).